A 304-amino-acid chain; its full sequence is tRNA pseudouridine synthase B (304 aa).

Asp-38 acts as the Nucleophile in catalysis.

Belongs to the pseudouridine synthase TruB family. Type 1 subfamily.

The catalysed reaction is uridine(55) in tRNA = pseudouridine(55) in tRNA. Its function is as follows. Responsible for synthesis of pseudouridine from uracil-55 in the psi GC loop of transfer RNAs. The sequence is that of tRNA pseudouridine synthase B from Listeria monocytogenes serovar 1/2a (strain ATCC BAA-679 / EGD-e).